Here is a 158-residue protein sequence, read N- to C-terminus: NAD(P)H-quinone oxidoreductase subunit J, chloroplastic (158 aa).

This sequence belongs to the complex I 30 kDa subunit family. In terms of assembly, NDH is composed of at least 16 different subunits, 5 of which are encoded in the nucleus.

Its subcellular location is the plastid. It localises to the chloroplast thylakoid membrane. The enzyme catalyses a plastoquinone + NADH + (n+1) H(+)(in) = a plastoquinol + NAD(+) + n H(+)(out). It carries out the reaction a plastoquinone + NADPH + (n+1) H(+)(in) = a plastoquinol + NADP(+) + n H(+)(out). Functionally, NDH shuttles electrons from NAD(P)H:plastoquinone, via FMN and iron-sulfur (Fe-S) centers, to quinones in the photosynthetic chain and possibly in a chloroplast respiratory chain. The immediate electron acceptor for the enzyme in this species is believed to be plastoquinone. Couples the redox reaction to proton translocation, and thus conserves the redox energy in a proton gradient. The sequence is that of NAD(P)H-quinone oxidoreductase subunit J, chloroplastic from Helianthus annuus (Common sunflower).